Reading from the N-terminus, the 888-residue chain is Protein translocase subunit SecA (888 aa).

Residues Q81, 99–103, and D489 each bind ATP; that span reads GEGKT.

This sequence belongs to the SecA family.

It localises to the plastid. The protein resides in the chloroplast stroma. It is found in the chloroplast thylakoid membrane. It carries out the reaction ATP + H2O + cellular proteinSide 1 = ADP + phosphate + cellular proteinSide 2.. Has a central role in coupling the hydrolysis of ATP to the transfer of proteins across the thylakoid membrane. The protein is Protein translocase subunit SecA of Trieres chinensis (Marine centric diatom).